The following is a 341-amino-acid chain: Phenylalanine--tRNA ligase alpha subunit (341 aa).

E259 is a Mg(2+) binding site.

This sequence belongs to the class-II aminoacyl-tRNA synthetase family. Phe-tRNA synthetase alpha subunit type 1 subfamily. Tetramer of two alpha and two beta subunits. Mg(2+) serves as cofactor.

Its subcellular location is the cytoplasm. It carries out the reaction tRNA(Phe) + L-phenylalanine + ATP = L-phenylalanyl-tRNA(Phe) + AMP + diphosphate + H(+). This is Phenylalanine--tRNA ligase alpha subunit from Mycobacterium tuberculosis (strain ATCC 25177 / H37Ra).